The following is a 202-amino-acid chain: Tetranectin (202 aa).

An N-terminal signal peptide occupies residues 1–21 (MGFWGTYLLFCLFSFLSQLTA). Disulfide bonds link C71/C81, C98/C197, and C173/C189. The 122-residue stretch at 77–198 (VNLKCLLAFT…CRDQLPYICQ (122 aa)) folds into the C-type lectin domain.

As to quaternary structure, homotrimer. Highest expression in lung, skeletal muscle and heart. Expressed in retina.

The protein localises to the secreted. Functionally, tetranectin binds to plasminogen and to isolated kringle 4. May be involved in the packaging of molecules destined for exocytosis. Plays a role in retinal function. The polypeptide is Tetranectin (Clec3b) (Mus musculus (Mouse)).